A 267-amino-acid chain; its full sequence is Hydroxyethylthiazole kinase (267 aa).

Substrate is bound at residue methionine 51. ATP contacts are provided by arginine 127 and serine 173. Residue alanine 200 participates in substrate binding.

It belongs to the Thz kinase family. It depends on Mg(2+) as a cofactor.

The catalysed reaction is 5-(2-hydroxyethyl)-4-methylthiazole + ATP = 4-methyl-5-(2-phosphooxyethyl)-thiazole + ADP + H(+). It functions in the pathway cofactor biosynthesis; thiamine diphosphate biosynthesis; 4-methyl-5-(2-phosphoethyl)-thiazole from 5-(2-hydroxyethyl)-4-methylthiazole: step 1/1. Catalyzes the phosphorylation of the hydroxyl group of 4-methyl-5-beta-hydroxyethylthiazole (THZ). This chain is Hydroxyethylthiazole kinase, found in Psychromonas ingrahamii (strain DSM 17664 / CCUG 51855 / 37).